A 114-amino-acid polypeptide reads, in one-letter code: MSYSLKTIEEHFVPYSIAKKYIKELIDTGSSSNLIQKTFDYLNSISRCDEDSASKIMKELEEIVKREDVRAVLASICPTTVEEVRSVLVIDPSTIYSTEQIQKIIEIIKKYVES.

It belongs to the eukaryotic RPB4 RNA polymerase subunit family. In terms of assembly, part of the 13-subunit RNA polymerase complex. Forms a stalk with Rpo7 that extends from the main structure. In terms of processing, in purified enzyme appears as 5 forms, each differing by about 200 Da of a covalently bound, negatively charged residue. Not glycosylated.

Its subcellular location is the cytoplasm. The catalysed reaction is RNA(n) + a ribonucleoside 5'-triphosphate = RNA(n+1) + diphosphate. Functionally, DNA-dependent RNA polymerase catalyzes the transcription of DNA into RNA using the four ribonucleoside triphosphates as substrates. This subunit is less well bound than the others. Probably not involved in transcription initiation. This is DNA-directed RNA polymerase subunit Rpo4 from Sulfolobus acidocaldarius (strain ATCC 33909 / DSM 639 / JCM 8929 / NBRC 15157 / NCIMB 11770).